We begin with the raw amino-acid sequence, 660 residues long: Polyadenylate-binding protein 3 (660 aa).

RRM domains lie at 49–126, 136–213, 229–306, and 332–409; these read SSLY…LSNR, GNIF…HFIR, TNVY…RAQK, and ANLY…LAQR. Positions 571–648 constitute a PABC domain; sequence PISKLTSSLA…ALDVLRLSVD (78 aa).

The protein belongs to the polyadenylate-binding protein type-1 family. Expressed predominantly in immature flowers. Detected in tapetum and pollen. Strongly expressed in immatures siliques.

It is found in the cytoplasm. Its subcellular location is the nucleus. Functionally, binds the poly(A) tail of mRNA. Appears to be an important mediator of the multiple roles of the poly(A) tail in mRNA biogenesis, stability and translation. In the cytoplasm, affects both translation and mRNA decay. Inhibits the polyadenylated RNA degradation by the Rrp41p 3'--&gt;5' exonuclease in vitro. Binds with the 5'UTRs of PAB2, PAB3 and with a lower affinity with the 5'UTR of PAB5. The sequence is that of Polyadenylate-binding protein 3 (PAB3) from Arabidopsis thaliana (Mouse-ear cress).